A 175-amino-acid polypeptide reads, in one-letter code: Thioredoxin M3, chloroplastic (175 aa).

Residues 1-59 (MAATATACPAPPPPRSLYRGVALAAPGRRRAGYGASSSAARRWPGCRRRWAAHRIRTVS) constitute a chloroplast transit peptide. Positions 61 to 171 (AYSPRGAKTI…YVRAIEKSIS (111 aa)) constitute a Thioredoxin domain. Residues cysteine 95 and cysteine 98 each act as nucleophile in the active site. Cysteine 95 and cysteine 98 are oxidised to a cystine.

Belongs to the thioredoxin family. Plant M-type subfamily.

The protein localises to the plastid. Its subcellular location is the chloroplast. Functionally, probable thiol-disulfide oxidoreductase that may be involved in the redox regulation of chloroplastic enzymes. This is Thioredoxin M3, chloroplastic from Oryza sativa subsp. japonica (Rice).